Reading from the N-terminus, the 386-residue chain is bHLH transcription factor RHL1 (386 aa).

Positions 119-186 (FTGSLNGTQP…RRGQATDPHS (68 aa)) are disordered. Positions 127–137 (QPQQHFQHPPQ) are enriched in low complexity. Residues 138 to 151 (GNSNQIQGQNFGAT) are compositionally biased toward polar residues. Residues 180–193 (QATDPHSIAERLRR) are basic motif; degenerate. Residues 180 to 229 (QATDPHSIAERLRRERIAERMKALQELVPNANKTDKASMLDEIIDYVKFL) form the bHLH domain. Positions 194-229 (ERIAERMKALQELVPNANKTDKASMLDEIIDYVKFL) are helix-loop-helix motif.

As to expression, expressed in root epidermal cells.

The protein resides in the nucleus. In terms of biological role, transcription factor that regulates the development of root hairs. In Lotus japonicus (Lotus corniculatus var. japonicus), this protein is bHLH transcription factor RHL1.